The primary structure comprises 776 residues: General transcription and DNA repair factor IIH helicase subunit XPD (776 aa).

The region spanning 7-277 (DLLVYFPYSY…KKVDEKRLKD (271 aa)) is the Helicase ATP-binding domain. 42-49 (MPSGTGKT) contacts ATP. Residues Cys-115, Cys-133, Cys-150, and Cys-184 each coordinate [4Fe-4S] cluster. Positions 228–231 (DEAH) match the DEAH box motif. Residues 736–776 (HVEKQSTSKPPQQQNSAINSTITTSTTTTTTTSTISETHLT) form a disordered region. A compositionally biased stretch (polar residues) spans 742-754 (TSKPPQQQNSAIN). A compositionally biased stretch (low complexity) spans 755 to 776 (STITTSTTTTTTTSTISETHLT).

This sequence belongs to the helicase family. RAD3/XPD subfamily. As to quaternary structure, component of the 7-subunit TFIIH core complex composed of XPB/repB, XPD/repD, gtf2h1, gtf2h2, gtf2h3, gtf2h4 and gtf2h5, which is active in NER. The core complex associates with the 3-subunit CDK-activating kinase (CAK) module composed of cycH/cyclin H, cdk7 and mnat1 to form the 10-subunit holoenzyme (holo-TFIIH) active in transcription. Mg(2+) serves as cofactor. It depends on [4Fe-4S] cluster as a cofactor.

The protein resides in the nucleus. The catalysed reaction is Couples ATP hydrolysis with the unwinding of duplex DNA at the replication fork by translocating in the 5'-3' direction. This creates two antiparallel DNA single strands (ssDNA). The leading ssDNA polymer is the template for DNA polymerase III holoenzyme which synthesizes a continuous strand.. It catalyses the reaction ATP + H2O = ADP + phosphate + H(+). Its function is as follows. ATP-dependent 5'-3' DNA helicase, component of the general transcription and DNA repair factor IIH (TFIIH) core complex, which is involved in general and transcription-coupled nucleotide excision repair (NER) of damaged DNA and, when complexed to CDK-activating kinase (CAK), in transcription by RNA polymerase II. In NER, TFIIH acts by opening DNA around the lesion to allow the excision of the damaged oligonucleotide and its replacement by a new DNA fragment. The ATP-dependent helicase activity of XPD/repD is required for DNA opening. In transcription, TFIIH has an essential role in transcription initiation. When the pre-initiation complex (PIC) has been established, TFIIH is required for promoter opening and promoter escape. Phosphorylation of the C-terminal tail (CTD) of the largest subunit of RNA polymerase II by the kinase module CAK controls the initiation of transcription. XPD/repD acts by forming a bridge between CAK and the core-TFIIH complex. In Dictyostelium discoideum (Social amoeba), this protein is General transcription and DNA repair factor IIH helicase subunit XPD.